Consider the following 53-residue polypeptide: uncharacterized protein (53 aa).

The protein resides in the plastid. It is found in the chloroplast. This is an uncharacterized protein from Guillardia theta (Cryptophyte).